A 352-amino-acid polypeptide reads, in one-letter code: UDP-N-acetylglucosamine--N-acetylmuramyl-(pentapeptide) pyrophosphoryl-undecaprenol N-acetylglucosamine transferase 2 (352 aa).

UDP-N-acetyl-alpha-D-glucosamine contacts are provided by residues 11-13, Arg164, Ser194, and Gln289; that span reads SAG.

Belongs to the glycosyltransferase 28 family. MurG subfamily.

Its subcellular location is the cell membrane. It carries out the reaction di-trans,octa-cis-undecaprenyl diphospho-N-acetyl-alpha-D-muramoyl-L-alanyl-D-glutamyl-meso-2,6-diaminopimeloyl-D-alanyl-D-alanine + UDP-N-acetyl-alpha-D-glucosamine = di-trans,octa-cis-undecaprenyl diphospho-[N-acetyl-alpha-D-glucosaminyl-(1-&gt;4)]-N-acetyl-alpha-D-muramoyl-L-alanyl-D-glutamyl-meso-2,6-diaminopimeloyl-D-alanyl-D-alanine + UDP + H(+). The protein operates within cell wall biogenesis; peptidoglycan biosynthesis. Cell wall formation. Catalyzes the transfer of a GlcNAc subunit on undecaprenyl-pyrophosphoryl-MurNAc-pentapeptide (lipid intermediate I) to form undecaprenyl-pyrophosphoryl-MurNAc-(pentapeptide)GlcNAc (lipid intermediate II). The polypeptide is UDP-N-acetylglucosamine--N-acetylmuramyl-(pentapeptide) pyrophosphoryl-undecaprenol N-acetylglucosamine transferase 2 (Bacillus anthracis).